A 501-amino-acid chain; its full sequence is Probable cytochrome P450 28d2 (501 aa).

Heme is bound at residue C446.

The protein belongs to the cytochrome P450 family. Requires heme as cofactor.

It is found in the endoplasmic reticulum membrane. The protein resides in the microsome membrane. In terms of biological role, may be involved in the metabolism of insect hormones and in the breakdown of synthetic insecticides. This is Probable cytochrome P450 28d2 (Cyp28d2) from Drosophila melanogaster (Fruit fly).